The following is a 462-amino-acid chain: tRNA(Ile)-lysidine synthase (462 aa).

ATP is bound at residue 31 to 36 (SGGRDS).

It belongs to the tRNA(Ile)-lysidine synthase family.

The protein localises to the cytoplasm. It catalyses the reaction cytidine(34) in tRNA(Ile2) + L-lysine + ATP = lysidine(34) in tRNA(Ile2) + AMP + diphosphate + H(+). Functionally, ligates lysine onto the cytidine present at position 34 of the AUA codon-specific tRNA(Ile) that contains the anticodon CAU, in an ATP-dependent manner. Cytidine is converted to lysidine, thus changing the amino acid specificity of the tRNA from methionine to isoleucine. The protein is tRNA(Ile)-lysidine synthase of Ralstonia nicotianae (strain ATCC BAA-1114 / GMI1000) (Ralstonia solanacearum).